The primary structure comprises 468 residues: Cysteine--tRNA ligase (468 aa).

A Zn(2+)-binding site is contributed by Cys33. Residues 35–45 carry the 'HIGH' region motif; that stretch reads ATVQGLPHIGH. 3 residues coordinate Zn(2+): Cys211, His236, and Glu240. A 'KMSKS' region motif is present at residues 267–271; it reads KMSKS. Lys270 contacts ATP.

Belongs to the class-I aminoacyl-tRNA synthetase family. As to quaternary structure, monomer. Requires Zn(2+) as cofactor.

It is found in the cytoplasm. The catalysed reaction is tRNA(Cys) + L-cysteine + ATP = L-cysteinyl-tRNA(Cys) + AMP + diphosphate. This chain is Cysteine--tRNA ligase, found in Mycobacterium ulcerans (strain Agy99).